Consider the following 432-residue polypeptide: MKYLIKNAHVIDPANKIDGLKDILIENGKIAAVENKIEDNAAKIIDAKGLTAMPGFVDMHTHLREPGQEGKETIFTGTKAALKGGFTTVCMMPNTNPAMDSKNNLAIAQDIIRKTANVNVEIMGAITKNRAGKELSNFAELKQAGAIALSDDGSGVEDDAVMQAAFKESVKQDILLISHSEDSKLSAGGVMNEGLISTKLGLKPISNASEYEMVKREIQLAKGLDAKIHIAHVSTKESCEIIAKAKKQGVMVTAEATPHHFTLTDKACESFSGNTKMNPPLRSEADVEALKQALKDGTIDAIATDHAPHAVHEKEVEFDLAYFGIIGLETAFPLAYDVLVKSGLIDMAKLVGLMSLNPSKILGLKKGTLTPGADADITIVDLNKQWVYSKEEVQSLSCNSPFIGKNLQGYIEYTFVGGELKLENGTLKVKDA.

Zn(2+) is bound by residues histidine 60 and histidine 62. Residues 62–64 and asparagine 94 each bind substrate; that span reads HLR. Residues aspartate 152, histidine 179, and histidine 232 each contribute to the Zn(2+) site. Asparagine 278 is a binding site for substrate. Residue aspartate 305 participates in Zn(2+) binding. Residue aspartate 305 is part of the active site. Substrate is bound by residues histidine 309 and 323–324; that span reads FG.

The protein belongs to the metallo-dependent hydrolases superfamily. DHOase family. Class I DHOase subfamily. It depends on Zn(2+) as a cofactor.

The catalysed reaction is (S)-dihydroorotate + H2O = N-carbamoyl-L-aspartate + H(+). It participates in pyrimidine metabolism; UMP biosynthesis via de novo pathway; (S)-dihydroorotate from bicarbonate: step 3/3. Its function is as follows. Catalyzes the reversible cyclization of carbamoyl aspartate to dihydroorotate. The protein is Dihydroorotase of Elusimicrobium minutum (strain Pei191).